Consider the following 188-residue polypeptide: Calcium load-activated calcium channel (188 aa).

Residues 1–4 (MSTM) lie on the Lumenal side of the membrane. The chain crosses the membrane as a helical span at residues 5–32 (FADTLLIVFISVCTALLAEGITWVLVYR). Residues 32 to 89 (RTDKYKRLKAEVEKQSKKLEKKKETITESAGRQQKKKIERQEEKLKNNNRDLSMVRMK) adopt a coiled-coil conformation. Residues 33–86 (TDKYKRLKAEVEKQSKKLEKKKETITESAGRQQKKKIERQEEKLKNNNRDLSMV) lie on the Cytoplasmic side of the membrane. Position 60 is a phosphoserine (Ser60). Residues 87-106 (RMKSMFAIGFCFTALMGMFN) form a helical membrane-spanning segment. Over 107-120 (SIFDGRVVAKLPFT) the chain is Lumenal. The stretch at 121-130 (PLSYIQGLSH) is an intramembrane region. At 131–140 (RNLLGDDTTD) the chain is on the lumenal side. A helical transmembrane segment spans residues 141-162 (CSFIFLYILCTMSIRQNIQKIL). The Cytoplasmic portion of the chain corresponds to 163–188 (GLAPSRAATKQAGGFLGPPPPSGKFS). Ser188 bears the Phosphoserine mark.

The protein belongs to the TMCO1 family. In terms of assembly, homodimer and homotetramer. Homodimer under resting conditions; forms homotetramers following ER calcium overload. Component of the GET- and EMC-like (GEL) complex, composed of RAB5IF/OPTI and TMCO1. The GEL complex is part of the multi-pass translocon (MPT) complex, composed of three subcomplexes, the GEL complex (composed of RAB5IF/OPTI and TMCO1), the BOS complex (composed of NCLN/Nicalin, NOMO1 and TMEM147) and the PAT complex (composed of WDR83OS/Asterix and CCDC47). The MPT complex associates with the SEC61 complex.

The protein localises to the endoplasmic reticulum membrane. It localises to the golgi apparatus membrane. The protein resides in the mitochondrion membrane. The catalysed reaction is Ca(2+)(in) = Ca(2+)(out). Its function is as follows. Endoplasmic reticulum (ER) calcium-selective channel preventing intracellular Ca2(+) stores from overfilling and maintaining calcium homeostasis in the ER. In response to endoplasmic reticulum (ER) Ca2(+) overloading, assembles into a homotetramer, forming a functional calcium-selective channel facilitating Ca2(+) release. Mediates ER Ca2(+) homeostasis in osteoblasts and plays a key role in bone formation, via the CaMKII-HDAC4-RUNX2 signaling axis. Component of the multi-pass translocon (MPT) complex that mediates insertion of multi-pass membrane proteins into the lipid bilayer of membranes. The MPT complex takes over after the SEC61 complex: following membrane insertion of the first few transmembrane segments of proteins by the SEC61 complex, the MPT complex occludes the lateral gate of the SEC61 complex to promote insertion of subsequent transmembrane regions. Within the MPT complex, the GEL subcomplex may mediate insertion of transmembrane regions into the membrane. The chain is Calcium load-activated calcium channel from Bos taurus (Bovine).